Consider the following 687-residue polypeptide: Outer dynein arm-docking complex subunit 1 (687 aa).

3 coiled-coil regions span residues 100–193, 222–267, and 341–421; these read QVRV…YLNV, REEA…LKLK, and INEQ…LFTR. Positions 126–147 are disordered; sequence SRNSAHSKNARSPGCVQHDKVK. 3 disordered regions span residues 363–388, 487–511, and 540–687; these read VSGR…QRVD, FPKK…AKDD, and ESTP…QSNY. Over residues 366–388 the composition is skewed to basic and acidic residues; that stretch reads RRSEEDRRAQQEQQRAELQQRVD. Over residues 544–556 the composition is skewed to low complexity; it reads SMTSSTQKVSSSS. Polar residues-rich tracts occupy residues 557–611 and 620–629; these read RLVT…SSRG and RSPNSSSYLG. Positions 660-680 are enriched in low complexity; it reads SPGPASSPGPASSTGQASSTS.

It belongs to the ODA1/DCC2 family. In terms of assembly, component of the outer dynein arm-docking complex along with ODAD2, ODAD3, ODAD4 and CLXN. Interacts with ODAD3. Interacts with ODAD4; this interaction may facilitate the recruitment and/or attachment of outer dynein arm docking complex proteins, including ODAD1, ODAD3, and ODAD4 to ciliary axonemes. Interacts with DNAH9. Interacts with MNS1. Interacts with PIERCE1 and PIERCE2; the interactions link the outer dynein arms docking complex (ODA-DC) to the internal microtubule inner proteins (MIP) in cilium axoneme. Expressed in trachea multiciliated cells.

It is found in the cytoplasm. The protein resides in the cytoskeleton. It localises to the cilium axoneme. Its function is as follows. Component of the outer dynein arm-docking complex (ODA-DC) that mediates outer dynein arms (ODA) binding onto the doublet microtubule. Involved in mediating assembly of both ODAs and their axonemal docking complex onto ciliary microtubules. The polypeptide is Outer dynein arm-docking complex subunit 1 (ODAD1) (Bos taurus (Bovine)).